The sequence spans 372 residues: tRNA-specific 2-thiouridylase MnmA (372 aa).

ATP contacts are provided by residues 16–23 (GMSGGVDS) and methionine 42. The interval 102 to 104 (NPD) is interaction with target base in tRNA. Catalysis depends on cysteine 107, which acts as the Nucleophile. A disulfide bridge links cysteine 107 with cysteine 205. Glycine 132 is an ATP binding site. Residues 155–157 (KDQ) form an interaction with tRNA region. Cysteine 205 functions as the Cysteine persulfide intermediate in the catalytic mechanism. An interaction with tRNA region spans residues 317–318 (RY).

The protein belongs to the MnmA/TRMU family.

The protein resides in the cytoplasm. The catalysed reaction is S-sulfanyl-L-cysteinyl-[protein] + uridine(34) in tRNA + AH2 + ATP = 2-thiouridine(34) in tRNA + L-cysteinyl-[protein] + A + AMP + diphosphate + H(+). Its function is as follows. Catalyzes the 2-thiolation of uridine at the wobble position (U34) of tRNA, leading to the formation of s(2)U34. The protein is tRNA-specific 2-thiouridylase MnmA of Shewanella sp. (strain MR-7).